Reading from the N-terminus, the 244-residue chain is uncharacterized protein (244 aa).

The next 6 helical transmembrane spans lie at 5–27 (KFALLFTFAACFAVIVFFWLLAV), 37–59 (IVMVLLISPIFAILLAFNLSRFL), 87–106 (LVFIHLMPIAFLGALIFYYG), 116–138 (LSLFALIFALSPLLFLGISFFVA), 159–181 (FWIWIHLFVILLIIISKVLVQPS), and 196–218 (GVFNLLIIATMNAIFGVTGRMVA).

It localises to the cell membrane. This is an uncharacterized protein from Archaeoglobus fulgidus (strain ATCC 49558 / DSM 4304 / JCM 9628 / NBRC 100126 / VC-16).